Here is a 403-residue protein sequence, read N- to C-terminus: E2F transcription factor-like E2FE (403 aa).

Residues 34 to 99 mediate DNA binding; that stretch reads RKQKSLGLLC…RAKNQYTWKG (66 aa). The tract at residues 128–167 is disordered; the sequence is VKGSDDEDDDEESSQPHSSSQTDSSKPGSLPQSSDPSKID. The segment covering 142-152 has biased composition (low complexity); that stretch reads QPHSSSQTDSS. Polar residues predominate over residues 153–163; the sequence is KPGSLPQSSDP. A DNA-binding region spans residues 169-250; the sequence is RREKSLGLLT…SRKPAFKWLG (82 aa). A disordered region spans residues 282-319; the sequence is VKRSKSSSSSQENATERRLKMKKHSTPESSYNKSFDVH.

The protein belongs to the E2F/DP family. Expressed exclusively in mitotically dividing cells. Highly expressed in young leaves and mature flowers. Lower expression in young stalk and in young and mature flowers.

Its subcellular location is the nucleus. Inhibitor of E2F-dependent activation of gene expression. Binds specifically the E2 recognition site without interacting with DP proteins and prevents transcription activation by E2F/DP heterodimers. Controls the timing of endocycle onset and inhibits endoreduplication. The sequence is that of E2F transcription factor-like E2FE (E2FE) from Arabidopsis thaliana (Mouse-ear cress).